A 181-amino-acid polypeptide reads, in one-letter code: Adenylate kinase (181 aa).

10 to 15 (GAGKGT) is an ATP binding site. The interval 30 to 59 (STGDLFRDNITNETELGVEAKRYLDAGDLV) is NMP. AMP is bound by residues Thr-31, Arg-36, 57 to 59 (DLV), 85 to 88 (GYPR), and Gln-92. The tract at residues 126 to 132 (GRGRADD) is LID. Position 127 (Arg-127) interacts with ATP. Residues Arg-129 and Arg-140 each coordinate AMP. Residue Gly-166 participates in ATP binding.

This sequence belongs to the adenylate kinase family. In terms of assembly, monomer.

It is found in the cytoplasm. It carries out the reaction AMP + ATP = 2 ADP. Its pathway is purine metabolism; AMP biosynthesis via salvage pathway; AMP from ADP: step 1/1. Catalyzes the reversible transfer of the terminal phosphate group between ATP and AMP. Plays an important role in cellular energy homeostasis and in adenine nucleotide metabolism. The polypeptide is Adenylate kinase (Mycobacterium sp. (strain MCS)).